A 637-amino-acid polypeptide reads, in one-letter code: Chaperone protein HtpG (637 aa).

The tract at residues 1-345 is a; substrate-binding; it reads MSQQETHGFQ…SNDLPLNVSR (345 aa). Residues 346 to 562 form a b region; the sequence is EILQDNQVTT…EGEMSTQMIK (217 aa). The interval 563–637 is c; that stretch reads LMQAAGQAVP…MNQMLLANAK (75 aa).

It belongs to the heat shock protein 90 family. Homodimer.

Its subcellular location is the cytoplasm. In terms of biological role, molecular chaperone. Has ATPase activity. This is Chaperone protein HtpG from Shewanella denitrificans (strain OS217 / ATCC BAA-1090 / DSM 15013).